The sequence spans 223 residues: Small ribosomal subunit protein uS3 (223 aa).

The region spanning 38–106 (LKRELKEKLK…EVFIDILEVN (69 aa)) is the KH type-2 domain.

Belongs to the universal ribosomal protein uS3 family. As to quaternary structure, part of the 30S ribosomal subunit. Forms a tight complex with proteins S10 and S14.

Functionally, binds the lower part of the 30S subunit head. Binds mRNA in the 70S ribosome, positioning it for translation. The sequence is that of Small ribosomal subunit protein uS3 from Acidobacterium capsulatum (strain ATCC 51196 / DSM 11244 / BCRC 80197 / JCM 7670 / NBRC 15755 / NCIMB 13165 / 161).